The sequence spans 122 residues: Large ribosomal subunit protein uL14 (122 aa).

The protein belongs to the universal ribosomal protein uL14 family. In terms of assembly, part of the 50S ribosomal subunit. Forms a cluster with proteins L3 and L19. In the 70S ribosome, L14 and L19 interact and together make contacts with the 16S rRNA in bridges B5 and B8.

Its function is as follows. Binds to 23S rRNA. Forms part of two intersubunit bridges in the 70S ribosome. This Rippkaea orientalis (strain PCC 8801 / RF-1) (Cyanothece sp. (strain PCC 8801)) protein is Large ribosomal subunit protein uL14.